The chain runs to 436 residues: 3-ketoacyl-CoA thiolase (436 aa).

The active-site Acyl-thioester intermediate is Cys-99. Residues His-392 and Cys-422 each act as proton acceptor in the active site.

The protein belongs to the thiolase-like superfamily. Thiolase family. In terms of assembly, heterotetramer of two alpha chains (FadJ) and two beta chains (FadI).

It localises to the cytoplasm. The enzyme catalyses an acyl-CoA + acetyl-CoA = a 3-oxoacyl-CoA + CoA. Its pathway is lipid metabolism; fatty acid beta-oxidation. Functionally, catalyzes the final step of fatty acid oxidation in which acetyl-CoA is released and the CoA ester of a fatty acid two carbons shorter is formed. This is 3-ketoacyl-CoA thiolase from Escherichia coli O1:K1 / APEC.